A 222-amino-acid polypeptide reads, in one-letter code: Proteoglycan 3 (222 aa).

The N-terminal stretch at 1 to 17 (MKQPLILSFLLLGMVSA) is a signal peptide. Basic and acidic residues predominate over residues 27 to 46 (NPKREESLKQEADGSREQGR). Positions 27–100 (NPKREESLKQ…PKEEDTTHFQ (74 aa)) are disordered. The segment covering 71-81 (FEDEEAMESDP) has biased composition (acidic residues). A compositionally biased stretch (basic and acidic residues) spans 83-97 (ALNKDSACPKEEDTT). The 117-residue stretch at 105–221 (CKSCNYVLVR…CKSHLPFICS (117 aa)) folds into the C-type lectin domain. 2 cysteine pairs are disulfide-bonded: cysteine 126-cysteine 220 and cysteine 197-cysteine 212.

Expressed in bone marrow, spleen, and thymus. Not detected in heart, liver or lung.

Its function is as follows. Possesses similar cytotoxic and cytostimulatory activities to PRG2/MBP. This is Proteoglycan 3 from Mus musculus (Mouse).